A 237-amino-acid polypeptide reads, in one-letter code: Phosphoribosylaminoimidazole-succinocarboxamide synthase (237 aa).

It belongs to the SAICAR synthetase family.

The catalysed reaction is 5-amino-1-(5-phospho-D-ribosyl)imidazole-4-carboxylate + L-aspartate + ATP = (2S)-2-[5-amino-1-(5-phospho-beta-D-ribosyl)imidazole-4-carboxamido]succinate + ADP + phosphate + 2 H(+). The protein operates within purine metabolism; IMP biosynthesis via de novo pathway; 5-amino-1-(5-phospho-D-ribosyl)imidazole-4-carboxamide from 5-amino-1-(5-phospho-D-ribosyl)imidazole-4-carboxylate: step 1/2. In Deinococcus deserti (strain DSM 17065 / CIP 109153 / LMG 22923 / VCD115), this protein is Phosphoribosylaminoimidazole-succinocarboxamide synthase.